The sequence spans 217 residues: Imidazole glycerol phosphate synthase subunit HisH (217 aa).

The 215-residue stretch at 3-217 (SVAVIDYGMG…FLRWEPWSSR (215 aa)) folds into the Glutamine amidotransferase type-1 domain. The active-site Nucleophile is the Cys-82. Catalysis depends on residues His-193 and Glu-195.

In terms of assembly, heterodimer of HisH and HisF.

The protein localises to the cytoplasm. It catalyses the reaction 5-[(5-phospho-1-deoxy-D-ribulos-1-ylimino)methylamino]-1-(5-phospho-beta-D-ribosyl)imidazole-4-carboxamide + L-glutamine = D-erythro-1-(imidazol-4-yl)glycerol 3-phosphate + 5-amino-1-(5-phospho-beta-D-ribosyl)imidazole-4-carboxamide + L-glutamate + H(+). The enzyme catalyses L-glutamine + H2O = L-glutamate + NH4(+). It functions in the pathway amino-acid biosynthesis; L-histidine biosynthesis; L-histidine from 5-phospho-alpha-D-ribose 1-diphosphate: step 5/9. In terms of biological role, IGPS catalyzes the conversion of PRFAR and glutamine to IGP, AICAR and glutamate. The HisH subunit catalyzes the hydrolysis of glutamine to glutamate and ammonia as part of the synthesis of IGP and AICAR. The resulting ammonia molecule is channeled to the active site of HisF. In Methylococcus capsulatus (strain ATCC 33009 / NCIMB 11132 / Bath), this protein is Imidazole glycerol phosphate synthase subunit HisH.